Consider the following 146-residue polypeptide: MVAATAEFRRVFSAFDRDADGKISAAELRLCMKAALGEDMSAEEAEALVSSADTDDDGLLDEEEFTKLAVQLEMGDEEERCRGLMEAFRMYEMEGEGRITPASLKRMLSKLGSHQGIEECQTMICRFDLDGDGVISFEEFKIMMDA.

4 EF-hand domains span residues 3–38, 40–75, 79–114, and 115–146; these read AATA…ALGE, MSAE…LEMG, ERCR…LGSH, and QGIE…MMDA. Residues Asp16, Asp18, Asp20, Lys22, Glu27, Asp53, Asp55, Asp57, and Glu64 each contribute to the Ca(2+) site. Positions 128, 130, 132, and 139 each coordinate Ca(2+).

In terms of biological role, potential calcium sensor. The chain is Putative calcium-binding protein CML19 (CML19) from Oryza sativa subsp. japonica (Rice).